A 274-amino-acid polypeptide reads, in one-letter code: MASDSRDRETACMLEFAVQMTCQSCVDAVSRSLQGVAGIQSVEVQLENQMVLVQTTLPSQVVQALLEDTGRQAVLKGMGSGRWQNLEAAVAILGGSGPVQGVVRFLQLTPERCLIEGTIDGLKPGLHGLHVHQFGDLTRNCNSCGDHFNPDGMSHGGPQDSDRHRGDLGNVCADADGRAVFRMEDELLKVWDVIGRSLVIDEGEDDLGRGGHPLSKITGNSGERLACGIIARSAGLFQNPKQICSCDGLTIWEERXRPIAGEGRKEPAQPPAHL.

The HMA domain maps to 11 to 74 (ACMLEFAVQM…LLEDTGRQAV (64 aa)). Positions 22 and 25 each coordinate Cu cation. K76 is covalently cross-linked (Glycyl lysine isopeptide (Lys-Gly) (interchain with G-Cter in ubiquitin)). The segment at 88-234 (AAVAILGGSG…LACGIIARSA (147 aa)) is superoxide dismutase-like. The cysteines at positions 141 and 227 are disulfide-linked. Residues H147, H155, H164, and D167 each coordinate Zn(2+). Glycyl lysine isopeptide (Lys-Gly) (interchain with G-Cter in ubiquitin) cross-links involve residues K189, K216, and K241. Cu cation is bound by residues C244 and C246.

This sequence in the C-terminal section; belongs to the Cu-Zn superoxide dismutase family. As to quaternary structure, homodimer, and heterodimer with SOD1. Interacts with COMMD1. Interacts with XIAP/BIRC4. Interacts with SLC31A1(via C-terminal domain); this interaction is Cu(1+)-mediated. The heterodimer CCS:SOD1 interacts with SLC31A1; this heterotrimer is Cu(1+)-mediated and its maintenance is regulated through SOD1 activation. Requires Cu(2+) as cofactor. Zn(2+) is required as a cofactor. Ubiquitinion by XIAP/BIRC4 leads to enhancement of its chaperone activity toward its physiologic target, SOD1, rather than proteasomal degradation. XIAP/BIRC4 preferentially ubiquitinates at Lys-241.

It localises to the cytoplasm. Its function is as follows. Delivers copper to copper zinc superoxide dismutase (SOD1). The protein is Copper chaperone for superoxide dismutase of Sus scrofa (Pig).